The following is a 426-amino-acid chain: Endoglucanase (426 aa).

The N-terminal stretch at 1 to 19 (MRRCMPLVAASVAALMLAG) is a signal peptide. Cys20 carries the N-palmitoyl cysteine lipid modification. A lipid anchor (S-diacylglycerol cysteine) is attached at Cys20. Positions 20–45 (CGGGDGDPSLSTASVSATDTTTLKPA) are excised as a propeptide. Glu249 serves as the catalytic Proton donor. Catalysis depends on Glu361, which acts as the Nucleophile.

The protein belongs to the glycosyl hydrolase 5 (cellulase A) family.

Its subcellular location is the cell membrane. The catalysed reaction is Endohydrolysis of (1-&gt;4)-beta-D-glucosidic linkages in cellulose, lichenin and cereal beta-D-glucans.. The sequence is that of Endoglucanase (egl) from Ralstonia solanacearum (Pseudomonas solanacearum).